We begin with the raw amino-acid sequence, 277 residues long: MAIKKYKPTTNGRRHMTSSDFAEITTSTPEKSLLRPLKKKAGRNNQGKLTVRHHGGGHKRQYRVIDFKRNKDGIPGRVATIEYDPNRSANIALINYADGEKRYIIAAKGLEVGQTIYSGAEADIKIGNALELKDIPVGTVVHNIEMKPGKGGQLVRSAGTSAQVLGKEGKYVLIRLNSGEVRMILATCRATIGQVGNEQHELINIGKAGRSRWMGKRPTVRGSVMNPNDHPHGGGEGKAPIGRKSPMSPWGKPTLGYKTRKKNNNSDKFIVRRRKKK.

Disordered stretches follow at residues 24 to 55 and 221 to 277; these read ITTS…RHHG and RGSV…RKKK.

Belongs to the universal ribosomal protein uL2 family. In terms of assembly, part of the 50S ribosomal subunit. Forms a bridge to the 30S subunit in the 70S ribosome.

Functionally, one of the primary rRNA binding proteins. Required for association of the 30S and 50S subunits to form the 70S ribosome, for tRNA binding and peptide bond formation. It has been suggested to have peptidyltransferase activity; this is somewhat controversial. Makes several contacts with the 16S rRNA in the 70S ribosome. This Listeria welshimeri serovar 6b (strain ATCC 35897 / DSM 20650 / CCUG 15529 / CIP 8149 / NCTC 11857 / SLCC 5334 / V8) protein is Large ribosomal subunit protein uL2.